The primary structure comprises 104 residues: Pyrimidine/purine nucleoside phosphorylase (104 aa).

Belongs to the nucleoside phosphorylase PpnP family.

The catalysed reaction is a purine D-ribonucleoside + phosphate = a purine nucleobase + alpha-D-ribose 1-phosphate. It catalyses the reaction adenosine + phosphate = alpha-D-ribose 1-phosphate + adenine. It carries out the reaction cytidine + phosphate = cytosine + alpha-D-ribose 1-phosphate. The enzyme catalyses guanosine + phosphate = alpha-D-ribose 1-phosphate + guanine. The catalysed reaction is inosine + phosphate = alpha-D-ribose 1-phosphate + hypoxanthine. It catalyses the reaction thymidine + phosphate = 2-deoxy-alpha-D-ribose 1-phosphate + thymine. It carries out the reaction uridine + phosphate = alpha-D-ribose 1-phosphate + uracil. The enzyme catalyses xanthosine + phosphate = alpha-D-ribose 1-phosphate + xanthine. In terms of biological role, catalyzes the phosphorolysis of diverse nucleosides, yielding D-ribose 1-phosphate and the respective free bases. Can use uridine, adenosine, guanosine, cytidine, thymidine, inosine and xanthosine as substrates. Also catalyzes the reverse reactions. The protein is Pyrimidine/purine nucleoside phosphorylase of Colwellia psychrerythraea (strain 34H / ATCC BAA-681) (Vibrio psychroerythus).